We begin with the raw amino-acid sequence, 247 residues long: RNA-free ribonuclease P (247 aa).

It belongs to the HARP family.

It carries out the reaction Endonucleolytic cleavage of RNA, removing 5'-extranucleotides from tRNA precursor.. In terms of biological role, RNA-free RNase P that catalyzes the removal of the 5'-leader sequence from pre-tRNA to produce the mature 5'-terminus. In Methanosarcina mazei (strain ATCC BAA-159 / DSM 3647 / Goe1 / Go1 / JCM 11833 / OCM 88) (Methanosarcina frisia), this protein is RNA-free ribonuclease P.